The primary structure comprises 329 residues: Malate dehydrogenase (329 aa).

12 to 18 (GAAGQIG) contributes to the NAD(+) binding site. Substrate-binding residues include arginine 95 and arginine 101. NAD(+)-binding positions include asparagine 108, glutamine 115, and 132–134 (VGN). The substrate site is built by asparagine 134 and arginine 165. Residue histidine 190 is the Proton acceptor of the active site.

It belongs to the LDH/MDH superfamily. MDH type 2 family. As to quaternary structure, homodimer.

It catalyses the reaction (S)-malate + NAD(+) = oxaloacetate + NADH + H(+). With respect to regulation, substrate inhibition is observed at high concentrations of oxaloacetate. Catalyzes the reversible oxidation of malate to oxaloacetate. Catalyzes the reduction of oxaloacetate more efficiently than the oxidation of malate. The sequence is that of Malate dehydrogenase from Syntrophobacter fumaroxidans (strain DSM 10017 / MPOB).